A 498-amino-acid chain; its full sequence is Membrane-bound lytic murein transglycosylase F (498 aa).

A signal peptide spans 1–29 (MFFKPDFRPRCAKWLIATGLFLMLGACVE). The segment at 30-267 (KPTTLERVKE…RLKDRYYGHV (238 aa)) is non-LT domain. Residues 268–498 (DVLGYVGAYT…SSSSTDESPL (231 aa)) form an LT domain region. Glutamate 314 is a catalytic residue. A disordered region spans residues 464-498 (VADGNLHVPGVDKTQPPVPPASPVPSSSSTDESPL).

In the N-terminal section; belongs to the bacterial solute-binding protein 3 family. This sequence in the C-terminal section; belongs to the transglycosylase Slt family.

It is found in the cell outer membrane. The enzyme catalyses Exolytic cleavage of the (1-&gt;4)-beta-glycosidic linkage between N-acetylmuramic acid (MurNAc) and N-acetylglucosamine (GlcNAc) residues in peptidoglycan, from either the reducing or the non-reducing ends of the peptidoglycan chains, with concomitant formation of a 1,6-anhydrobond in the MurNAc residue.. Its function is as follows. Murein-degrading enzyme that degrades murein glycan strands and insoluble, high-molecular weight murein sacculi, with the concomitant formation of a 1,6-anhydromuramoyl product. Lytic transglycosylases (LTs) play an integral role in the metabolism of the peptidoglycan (PG) sacculus. Their lytic action creates space within the PG sacculus to allow for its expansion as well as for the insertion of various structures such as secretion systems and flagella. This chain is Membrane-bound lytic murein transglycosylase F, found in Pseudomonas syringae pv. syringae (strain B728a).